A 137-amino-acid polypeptide reads, in one-letter code: uncharacterized protein (137 aa).

A helical transmembrane segment spans residues 116–136 (YLSIANLATLLLFGIIGLSII).

The protein resides in the host membrane. This is an uncharacterized protein from His1 virus (isolate Australia/Victoria) (His1V).